The following is a 451-amino-acid chain: Bifunctional protein GlmU (451 aa).

The tract at residues 1-230 (MNNPIAAIVL…PADVGGINSR (230 aa)) is pyrophosphorylase. Residues 10–13 (LAAG), Lys-24, Gln-74, 79–80 (GT), 102–104 (YGD), Gly-142, Glu-156, Asn-171, and Asn-228 contribute to the UDP-N-acetyl-alpha-D-glucosamine site. Asp-104 is a binding site for Mg(2+). Asn-228 contacts Mg(2+). The segment at 231–251 (AELAAAEAQWQAFRREEAMAA) is linker. Residues 252–451 (GASLRAPETV…RKKKAAEQKK (200 aa)) form an N-acetyltransferase region. Arg-317 and Lys-335 together coordinate UDP-N-acetyl-alpha-D-glucosamine. Residue His-347 is the Proton acceptor of the active site. Residues Tyr-350 and Asn-361 each contribute to the UDP-N-acetyl-alpha-D-glucosamine site. Acetyl-CoA-binding positions include Ala-364, 370-371 (NY), Ser-389, Ala-407, and Arg-424.

This sequence in the N-terminal section; belongs to the N-acetylglucosamine-1-phosphate uridyltransferase family. The protein in the C-terminal section; belongs to the transferase hexapeptide repeat family. In terms of assembly, homotrimer. Requires Mg(2+) as cofactor.

It localises to the cytoplasm. The catalysed reaction is alpha-D-glucosamine 1-phosphate + acetyl-CoA = N-acetyl-alpha-D-glucosamine 1-phosphate + CoA + H(+). It catalyses the reaction N-acetyl-alpha-D-glucosamine 1-phosphate + UTP + H(+) = UDP-N-acetyl-alpha-D-glucosamine + diphosphate. It functions in the pathway nucleotide-sugar biosynthesis; UDP-N-acetyl-alpha-D-glucosamine biosynthesis; N-acetyl-alpha-D-glucosamine 1-phosphate from alpha-D-glucosamine 6-phosphate (route II): step 2/2. It participates in nucleotide-sugar biosynthesis; UDP-N-acetyl-alpha-D-glucosamine biosynthesis; UDP-N-acetyl-alpha-D-glucosamine from N-acetyl-alpha-D-glucosamine 1-phosphate: step 1/1. Its pathway is bacterial outer membrane biogenesis; LPS lipid A biosynthesis. Catalyzes the last two sequential reactions in the de novo biosynthetic pathway for UDP-N-acetylglucosamine (UDP-GlcNAc). The C-terminal domain catalyzes the transfer of acetyl group from acetyl coenzyme A to glucosamine-1-phosphate (GlcN-1-P) to produce N-acetylglucosamine-1-phosphate (GlcNAc-1-P), which is converted into UDP-GlcNAc by the transfer of uridine 5-monophosphate (from uridine 5-triphosphate), a reaction catalyzed by the N-terminal domain. The sequence is that of Bifunctional protein GlmU from Sphingopyxis alaskensis (strain DSM 13593 / LMG 18877 / RB2256) (Sphingomonas alaskensis).